The following is a 78-amino-acid chain: Large ribosomal subunit protein bL28 (78 aa).

The protein belongs to the bacterial ribosomal protein bL28 family.

The polypeptide is Large ribosomal subunit protein bL28 (Acidithiobacillus ferrooxidans (strain ATCC 23270 / DSM 14882 / CIP 104768 / NCIMB 8455) (Ferrobacillus ferrooxidans (strain ATCC 23270))).